The primary structure comprises 365 residues: MSGNTFGTLFKVTTFGESHGLALGAIVDGCPPGIELCEADLQRDLDLRKPGTSKHTTQRREADEVKIMSGVFEGKTTGTPIGLIIENTDQRSKDYGNIADTFRPAHADYTYDQKYGFRDYRGGGRSSARETAMRVAAGAIAKKYLKQQFGIEIQGFLSQLGPIKLEVKDLSQVYDNSFFSPDPDAIPELEEYMTALRREGDSVGAKITVIAKNVMPGLGAPVFDRLDADIAKAIMSINAVKGVEIGDGFDVVEQKGSQHRDEMTPEGFLSNHAGGVLGGISSGQDIVVHMALKPTSSITIPGKSIDRAGNPIEVITKGRHDPCVGIRATPIAEAMLAITIIDHLLRHRAQNADVVCSTPIINGQA.

An NADP(+)-binding site is contributed by Arg48. FMN is bound by residues 125–127 (RSS), 238–239 (NA), Gly278, 293–297 (KPTSS), and Arg319.

Belongs to the chorismate synthase family. In terms of assembly, homotetramer. FMNH2 serves as cofactor.

It carries out the reaction 5-O-(1-carboxyvinyl)-3-phosphoshikimate = chorismate + phosphate. The protein operates within metabolic intermediate biosynthesis; chorismate biosynthesis; chorismate from D-erythrose 4-phosphate and phosphoenolpyruvate: step 7/7. Functionally, catalyzes the anti-1,4-elimination of the C-3 phosphate and the C-6 proR hydrogen from 5-enolpyruvylshikimate-3-phosphate (EPSP) to yield chorismate, which is the branch point compound that serves as the starting substrate for the three terminal pathways of aromatic amino acid biosynthesis. This reaction introduces a second double bond into the aromatic ring system. This is Chorismate synthase from Marinomonas sp. (strain MWYL1).